A 288-amino-acid chain; its full sequence is Single myb histone 4 (288 aa).

Disordered stretches follow at residues 1–42, 62–87, and 181–206; these read MGAP…PVLS, GLGS…SQPL, and DSLA…KPSK. The 60-residue stretch at 1-60 folds into the HTH myb-type domain; the sequence is MGAPKQKWTSEEEDALRAGVRKHGAGKWRTIQKDPEFSPVLSSRSNIDLKDKWRNLSFSA. Positions 28 to 56 form a DNA-binding region, H-T-H motif; the sequence is WRTIQKDPEFSPVLSSRSNIDLKDKWRNL. The segment covering 76–87 has biased composition (low complexity); it reads PSSSPSSSSQPL. The region spanning 113-181 is the H15 domain; the sequence is TLPKYGAMIM…KIDKSYRLPD (69 aa). A coiled-coil region spans residues 230–250; sequence KVADAEAKAHDAHDQTMEAER.

This sequence belongs to the histone H1/H5 family. SMH subfamily. Forms a homodimer and heterodimers.

The protein resides in the nucleus. The protein localises to the chromosome. Its subcellular location is the nucleolus. It localises to the telomere. Binds preferentially double-stranded telomeric repeats, but may also bind to the single telomeric strand. In Zea mays (Maize), this protein is Single myb histone 4 (SMH4).